Here is a 493-residue protein sequence, read N- to C-terminus: GTPase Der (493 aa).

2 consecutive EngA-type G domains span residues 3–166 (PVVA…AEAL) and 206–379 (IKLA…KSAT). Residues 9–16 (GRPNVGKS), 56–60 (DTGGI), 118–121 (NKVD), 212–219 (GRPNVGKS), 259–263 (DTAGV), and 324–327 (NKWD) each bind GTP. In terms of domain architecture, KH-like spans 380 to 464 (TRVGTSVLTR…PIRIQFQNSE (85 aa)).

It belongs to the TRAFAC class TrmE-Era-EngA-EngB-Septin-like GTPase superfamily. EngA (Der) GTPase family. Associates with the 50S ribosomal subunit.

Its function is as follows. GTPase that plays an essential role in the late steps of ribosome biogenesis. In Vibrio atlanticus (strain LGP32) (Vibrio splendidus (strain Mel32)), this protein is GTPase Der.